A 482-amino-acid chain; its full sequence is MMETMPNWLMQRAFLTPDRTAIEIEEEKVTFMELHEKVVSVCEHLTHVGVERGQKVAVLMKNGMEMITVIHALSYVGAVAVLLNTRLSREELLWQMDDAEVVCLVTDQDFDAKDVPVYSLAEVMNGPKEEASIQEEFSLEEAMTIIYTSGTTGKPKGVILTYGNHWASAVGSSLNLGLRDDDCWLACMPMFHVGGLSLLMKNIMYGMRILLVPKYDADFIHKALQTRGVTIISVVSKMLTDLLERLGAETYPSSLRCMLLGGGPAPKPLLEACVEKGIPVYQTYGMTETSSQICTLSADYMLTKVGSAGKPLFQCQLRIEKDGVVVPPLVEGEIVVKGPNVTGGYFNREDATRETIQNGWLHTGDLGYLDEEGFLYVLDRRSDLIISGGENIYPAQIEEVLLSHPAVAEAGVVGMSDDKWGQVPAAFVVKSGAVTEEEILHFCEEKLAKYKVPKKACFLEELPRNASKKLLRRELRQLVEEM.

It belongs to the ATP-dependent AMP-binding enzyme family. MenE subfamily.

The catalysed reaction is 2-succinylbenzoate + ATP + CoA = 2-succinylbenzoyl-CoA + AMP + diphosphate. Its pathway is quinol/quinone metabolism; 1,4-dihydroxy-2-naphthoate biosynthesis; 1,4-dihydroxy-2-naphthoate from chorismate: step 5/7. It participates in quinol/quinone metabolism; menaquinone biosynthesis. Functionally, converts 2-succinylbenzoate (OSB) to 2-succinylbenzoyl-CoA (OSB-CoA). The protein is 2-succinylbenzoate--CoA ligase of Bacillus cereus (strain ATCC 14579 / DSM 31 / CCUG 7414 / JCM 2152 / NBRC 15305 / NCIMB 9373 / NCTC 2599 / NRRL B-3711).